A 196-amino-acid chain; its full sequence is NAD(P)H-quinone oxidoreductase subunit I (196 aa).

4Fe-4S ferredoxin-type domains are found at residues 54 to 83 and 94 to 123; these read GRIH…VDWV and KHYS…VTEE. Residues cysteine 63, cysteine 66, cysteine 69, cysteine 73, cysteine 103, cysteine 106, cysteine 109, and cysteine 113 each coordinate [4Fe-4S] cluster. The disordered stretch occupies residues 174-196; the sequence is PAGAQRAGERPEAIANTAKSSEN.

It belongs to the complex I 23 kDa subunit family. NDH-1 is composed of at least 11 different subunits. Requires [4Fe-4S] cluster as cofactor.

Its subcellular location is the cellular thylakoid membrane. The catalysed reaction is a plastoquinone + NADH + (n+1) H(+)(in) = a plastoquinol + NAD(+) + n H(+)(out). It carries out the reaction a plastoquinone + NADPH + (n+1) H(+)(in) = a plastoquinol + NADP(+) + n H(+)(out). NDH-1 shuttles electrons from an unknown electron donor, via FMN and iron-sulfur (Fe-S) centers, to quinones in the respiratory and/or the photosynthetic chain. The immediate electron acceptor for the enzyme in this species is believed to be plastoquinone. Couples the redox reaction to proton translocation, and thus conserves the redox energy in a proton gradient. In Thermosynechococcus vestitus (strain NIES-2133 / IAM M-273 / BP-1), this protein is NAD(P)H-quinone oxidoreductase subunit I.